Reading from the N-terminus, the 589-residue chain is Protein sprouty (589 aa).

3 disordered regions span residues 1–37, 102–194, and 239–320; these read MDRR…GVDH, RPSS…RPES, and LHLQ…MGLG. 2 stretches are compositionally biased toward low complexity: residues 104–135 and 148–162; these read SSLS…SSSS and NNSI…INNN. The span at 163 to 172 shows a compositional bias: polar residues; sequence FLSHFQSAEP. Residues 239-272 are compositionally biased toward low complexity; sequence LHLQQHQQHLQQQQQQQQQQQQQQHLQHQQNQQH. The segment covering 276–286 has biased composition (polar residues); the sequence is ATTTQATSVGS. The region spanning 380–499 is the SPR domain; that stretch reads RCGRCRCEQC…CYGRFAGRGC (120 aa).

The protein belongs to the sprouty family. In terms of assembly, interacts with DRK and RasGAP1 proteins of the Ras pathway. In ovary, expressed from stage 7 of oogenesis in the posterior follicle cells and during stage 9 when the follicle cells migrate posteriorly over the oocyte nucleus, expression is seen in the dorsal and lateral cells and is excluded from the ventral cells. Once the migration of follicle cells is complete expressed in the dorsal-anterior corner of the egg chamber. Expressed in the embryonic tracheal system, developing eye imaginal disk, embryonic chordotonal organ precursors, midline glia and wing imaginal disk.

The protein resides in the cell membrane. In terms of biological role, inhibitor of tracheal branching that restricts branch budding by antagonizing the BNL-FGF pathway (BNL: branchless, an fgf inducer of branching). Acts as an antagonist of EGFR-mediated signaling in the eye (where it is important for cell determination) midline glia, chordotonal organs, wing and ovarian follicle cells. The chain is Protein sprouty (sty) from Drosophila melanogaster (Fruit fly).